The following is a 251-amino-acid chain: Maleate isomerase (251 aa).

Substrate contacts are provided by residues Asn-14, 76–78, Tyr-133, and Asn-163; that span reads CLV. The Nucleophile role is filled by Cys-76. Residue Cys-76 is modified to S-(2-succinyl)cysteine. Cys-194 serves as the catalytic Proton donor. 195 to 196 is a substrate binding site; that stretch reads VQ.

The protein belongs to the maleate isomerase family. As to quaternary structure, homodimer.

It catalyses the reaction maleate = fumarate. Catalyzes cis-trans isomerization of the C2-C3 double bond in maleate to yield fumarate. Shows a strict specificity for maleate, with no activity detected toward structurally related substrates including citraconate, mesaconate, dimethylmaleate, and maleamide. This Nocardia farcinica (strain IFM 10152) protein is Maleate isomerase.